A 215-amino-acid polypeptide reads, in one-letter code: Adenylate kinase (215 aa).

10–15 (GAGKGT) contributes to the ATP binding site. Positions 30-59 (STGDMFRAAMKNNTELGKKAKSFMDNGDLV) are NMP. AMP-binding positions include Thr31, Arg36, 57–59 (DLV), 85–88 (GFPR), and Gln92. The interval 126–163 (GRWICRTCGKTYHEIYNPPKVPGKCDLDGGELYQRDDD) is LID. Position 127 (Arg127) interacts with ATP. Zn(2+) contacts are provided by Cys130 and Cys133. Residue 136-137 (TY) coordinates ATP. The Zn(2+) site is built by Cys150 and Asp153. Residues Arg160 and Arg171 each contribute to the AMP site. Gln199 contributes to the ATP binding site.

It belongs to the adenylate kinase family. In terms of assembly, monomer.

Its subcellular location is the cytoplasm. It catalyses the reaction AMP + ATP = 2 ADP. Its pathway is purine metabolism; AMP biosynthesis via salvage pathway; AMP from ADP: step 1/1. Its function is as follows. Catalyzes the reversible transfer of the terminal phosphate group between ATP and AMP. Plays an important role in cellular energy homeostasis and in adenine nucleotide metabolism. In Listeria monocytogenes serotype 4b (strain CLIP80459), this protein is Adenylate kinase.